A 387-amino-acid polypeptide reads, in one-letter code: Cysteine desulfurase (387 aa).

Residues 72 to 73 (GT), Asn152, Gln180, and 200 to 202 (SAH) contribute to the pyridoxal 5'-phosphate site. Residue Lys203 is modified to N6-(pyridoxal phosphate)lysine. Residue Thr238 coordinates pyridoxal 5'-phosphate. Residue Cys326 is the Cysteine persulfide intermediate of the active site. Cys326 is a [2Fe-2S] cluster binding site.

It belongs to the class-V pyridoxal-phosphate-dependent aminotransferase family. NifS/IscS subfamily. Homodimer. It depends on pyridoxal 5'-phosphate as a cofactor.

It carries out the reaction (sulfur carrier)-H + L-cysteine = (sulfur carrier)-SH + L-alanine. In terms of biological role, catalyzes the removal of elemental sulfur atoms from cysteine to produce alanine. Seems to participate in the biosynthesis of the nitrogenase metalloclusters by providing the inorganic sulfur required for the Fe-S core formation. The sequence is that of Cysteine desulfurase from Sinorhizobium fredii (strain NBRC 101917 / NGR234).